The chain runs to 353 residues: MSSAANLPSPSPSPPIRTDVLIVGAGPVGLFAAFEAGVIGLSCQIVDGLDKVGGQCIELYPDKPIYDIPAIPSCTARELVERLLAQCRPFDPPIHLEQRVESVEQGGDGRWTVRTDRGLVFDVAAILLAAGNGAFVPQKLALAEAVPLESRHVHYSVPRLADFAGKTVVVAGGGDSALDWALALRKVARRVTLVHRRSGFSAADSSVESMRRAVEAGEMDFVVGAIAGLDVEDDALKSITLRHIEGETQLAAEHLVALYGLVADLGPIAQWGLSIHGGRVDVDTSNYESSRPGIFAVGDIAHYPNKQKLILSGFHEASLALRKAYSYAYPEKKRVHVHSSYDAKLAEKVSAAG.

7 residues coordinate FAD: Asp47, Gln55, Tyr60, Val100, Phe135, Asp299, and Ser340.

Belongs to the ferredoxin--NADP reductase type 2 family. In terms of assembly, homodimer. FAD serves as cofactor.

The catalysed reaction is 2 reduced [2Fe-2S]-[ferredoxin] + NADP(+) + H(+) = 2 oxidized [2Fe-2S]-[ferredoxin] + NADPH. The chain is Ferredoxin--NADP reductase from Paraburkholderia xenovorans (strain LB400).